We begin with the raw amino-acid sequence, 220 residues long: Deoxyribose-phosphate aldolase (220 aa).

Aspartate 89 serves as the catalytic Proton donor/acceptor. Lysine 151 serves as the catalytic Schiff-base intermediate with acetaldehyde. The active-site Proton donor/acceptor is the lysine 180.

It belongs to the DeoC/FbaB aldolase family. DeoC type 1 subfamily.

It is found in the cytoplasm. The enzyme catalyses 2-deoxy-D-ribose 5-phosphate = D-glyceraldehyde 3-phosphate + acetaldehyde. Its pathway is carbohydrate degradation; 2-deoxy-D-ribose 1-phosphate degradation; D-glyceraldehyde 3-phosphate and acetaldehyde from 2-deoxy-alpha-D-ribose 1-phosphate: step 2/2. Catalyzes a reversible aldol reaction between acetaldehyde and D-glyceraldehyde 3-phosphate to generate 2-deoxy-D-ribose 5-phosphate. In Staphylococcus epidermidis (strain ATCC 12228 / FDA PCI 1200), this protein is Deoxyribose-phosphate aldolase.